Reading from the N-terminus, the 496-residue chain is Xylulose kinase (496 aa).

83–84 serves as a coordination point for substrate; the sequence is MH. Asp-237 serves as the catalytic Proton acceptor.

The protein belongs to the FGGY kinase family.

It catalyses the reaction D-xylulose + ATP = D-xylulose 5-phosphate + ADP + H(+). Its function is as follows. Catalyzes the phosphorylation of D-xylulose to D-xylulose 5-phosphate. This Staphylococcus epidermidis (strain ATCC 12228 / FDA PCI 1200) protein is Xylulose kinase.